The chain runs to 598 residues: MSIQVLSDVLISQIAAGEVVERPAAALKEILENSLDAGATAIDVELEQGGVKRIRVSDDGVGIPRDELALALTRHATSKIATLADLEQVASLGFRGEALASIASVARVRLTSRHAGSDHAWTIHVDGGPLQPSSPAARSGGTTIDIEDMFFNTPARRKFLKTEATEYAHCAETVRRLALAWPQVAFTLVHNGRAQLRLKAEAAAARVRHVLGEVFEQHAIAVDAAAGALRLSGWVVRPVAATASRDAQHVFVNGRYVRDKLIVHALREAYRDVLHHQLNPAYCLFVELPPEHVDVNVHPAKTEIRFRDSRGVHQFLYHAVERLLAAPVAPAAPPSGPDARPPTFLQPRQAAMSLQVEEAMAFYAPFAAMAPGEGDEARHVPQASAAGLAGRAGPPRAFASDSSAVPPLGYALGQLHGVYVLAQNAHGLVLVDMHAAHERVVYEKLKTALDRRAVPAQALLIPVALTADPREVAEIAPHLDQLREIGFELSITSPNSVAVRAVPSLLKNADPVELTRAILAEIAEFGVARLLAERRNELLATLACHGAVRAHRTLSVPEMNALLREMEATERAGQCNHGRPTWFQLRLDELDAMFMRGR.

It belongs to the DNA mismatch repair MutL/HexB family.

Functionally, this protein is involved in the repair of mismatches in DNA. It is required for dam-dependent methyl-directed DNA mismatch repair. May act as a 'molecular matchmaker', a protein that promotes the formation of a stable complex between two or more DNA-binding proteins in an ATP-dependent manner without itself being part of a final effector complex. The chain is DNA mismatch repair protein MutL from Thiobacillus denitrificans (strain ATCC 25259 / T1).